Reading from the N-terminus, the 294-residue chain is Undecaprenyl-diphosphatase (294 aa).

6 consecutive transmembrane segments (helical) span residues 39–59 (PGAA…ILYF), 93–113 (ATLG…GFTL), 123–143 (NLWI…VVDA), 198–218 (SFLM…VKAV), 232–252 (PTLV…IGFL), and 268–288 (IGLA…AIDP).

Belongs to the UppP family.

The protein resides in the cell membrane. The catalysed reaction is di-trans,octa-cis-undecaprenyl diphosphate + H2O = di-trans,octa-cis-undecaprenyl phosphate + phosphate + H(+). In terms of biological role, catalyzes the dephosphorylation of undecaprenyl diphosphate (UPP). Confers resistance to bacitracin. The polypeptide is Undecaprenyl-diphosphatase (Bifidobacterium longum subsp. infantis (strain ATCC 15697 / DSM 20088 / JCM 1222 / NCTC 11817 / S12)).